A 219-amino-acid chain; its full sequence is Redox-sensing transcriptional repressor Rex (219 aa).

The H-T-H motif DNA-binding region spans 17–56 (RYLRYVEDLLNHDIMRISSSELSQRMGYTASQVRQDFNNF). 91-96 (GVGNLG) contributes to the NAD(+) binding site.

Belongs to the transcriptional regulatory Rex family. As to quaternary structure, homodimer.

Its subcellular location is the cytoplasm. Functionally, modulates transcription in response to changes in cellular NADH/NAD(+) redox state. The polypeptide is Redox-sensing transcriptional repressor Rex (Caldicellulosiruptor saccharolyticus (strain ATCC 43494 / DSM 8903 / Tp8T 6331)).